The following is a 475-amino-acid chain: Sulfate adenylyltransferase subunit 1 (475 aa).

The tr-type G domain occupies 25–239; it reads KSLLRFLTCG…EVLETVEIQR (215 aa). Residues 34 to 41 are G1; that stretch reads GSVDDGKS. 34 to 41 lines the GTP pocket; it reads GSVDDGKS. Residues 92-96 are G2; the sequence is GITID. The interval 113–116 is G3; sequence DTPG. GTP is bound by residues 113–117 and 168–171; these read DTPGH and NKMD. The interval 168 to 171 is G4; it reads NKMD. The interval 206–208 is G5; the sequence is SAL.

It belongs to the TRAFAC class translation factor GTPase superfamily. Classic translation factor GTPase family. CysN/NodQ subfamily. Heterodimer composed of CysD, the smaller subunit, and CysN.

It carries out the reaction sulfate + ATP + H(+) = adenosine 5'-phosphosulfate + diphosphate. It functions in the pathway sulfur metabolism; hydrogen sulfide biosynthesis; sulfite from sulfate: step 1/3. In terms of biological role, with CysD forms the ATP sulfurylase (ATPS) that catalyzes the adenylation of sulfate producing adenosine 5'-phosphosulfate (APS) and diphosphate, the first enzymatic step in sulfur assimilation pathway. APS synthesis involves the formation of a high-energy phosphoric-sulfuric acid anhydride bond driven by GTP hydrolysis by CysN coupled to ATP hydrolysis by CysD. This is Sulfate adenylyltransferase subunit 1 from Escherichia coli O9:H4 (strain HS).